Reading from the N-terminus, the 680-residue chain is DNA-directed RNA polymerase subunit beta' (680 aa).

Residues C69, C71, C87, and C90 each contribute to the Zn(2+) site. Residues D489, D491, and D493 each contribute to the Mg(2+) site.

Belongs to the RNA polymerase beta' chain family. RpoC1 subfamily. In terms of assembly, in plastids the minimal PEP RNA polymerase catalytic core is composed of four subunits: alpha, beta, beta', and beta''. When a (nuclear-encoded) sigma factor is associated with the core the holoenzyme is formed, which can initiate transcription. Requires Mg(2+) as cofactor. Zn(2+) serves as cofactor.

It localises to the plastid. The protein localises to the chloroplast. The catalysed reaction is RNA(n) + a ribonucleoside 5'-triphosphate = RNA(n+1) + diphosphate. Its function is as follows. DNA-dependent RNA polymerase catalyzes the transcription of DNA into RNA using the four ribonucleoside triphosphates as substrates. The polypeptide is DNA-directed RNA polymerase subunit beta' (Cucumis sativus (Cucumber)).